Reading from the N-terminus, the 350-residue chain is N-acetyl-gamma-glutamyl-phosphate reductase (350 aa).

Residue Cys-154 is part of the active site.

It belongs to the NAGSA dehydrogenase family. Type 1 subfamily.

It localises to the cytoplasm. It carries out the reaction N-acetyl-L-glutamate 5-semialdehyde + phosphate + NADP(+) = N-acetyl-L-glutamyl 5-phosphate + NADPH + H(+). The protein operates within amino-acid biosynthesis; L-arginine biosynthesis; N(2)-acetyl-L-ornithine from L-glutamate: step 3/4. Its function is as follows. Catalyzes the NADPH-dependent reduction of N-acetyl-5-glutamyl phosphate to yield N-acetyl-L-glutamate 5-semialdehyde. In Corynebacterium efficiens (strain DSM 44549 / YS-314 / AJ 12310 / JCM 11189 / NBRC 100395), this protein is N-acetyl-gamma-glutamyl-phosphate reductase.